The primary structure comprises 702 residues: Polyribonucleotide nucleotidyltransferase (702 aa).

2 residues coordinate Mg(2+): Asp487 and Asp493. In terms of domain architecture, KH spans 554 to 613 (PRLLTIKIHPDKIREVIGKGGSTIQAITKETGTQIDIQDDGTIVIASVNAIAAQAAKARI). The S1 motif domain occupies 623-691 (GRIYEGKVAK…KQGRIRLSMK (69 aa)).

The protein belongs to the polyribonucleotide nucleotidyltransferase family. As to quaternary structure, component of the RNA degradosome, which is a multiprotein complex involved in RNA processing and mRNA degradation. It depends on Mg(2+) as a cofactor.

The protein resides in the cytoplasm. It carries out the reaction RNA(n+1) + phosphate = RNA(n) + a ribonucleoside 5'-diphosphate. Functionally, involved in mRNA degradation. Catalyzes the phosphorolysis of single-stranded polyribonucleotides processively in the 3'- to 5'-direction. This chain is Polyribonucleotide nucleotidyltransferase, found in Stenotrophomonas maltophilia (strain R551-3).